Here is a 960-residue protein sequence, read N- to C-terminus: Phosphoenolpyruvate carboxylase 2 (960 aa).

Active-site residues include H167 and K595.

The protein belongs to the PEPCase type 1 family. Homotetramer. It depends on Mg(2+) as a cofactor.

It localises to the cytoplasm. The enzyme catalyses oxaloacetate + phosphate = phosphoenolpyruvate + hydrogencarbonate. Its pathway is photosynthesis; C3 acid pathway. Through the carboxylation of phosphoenolpyruvate (PEP) it forms oxaloacetate, a four-carbon dicarboxylic acid source for the tricarboxylic acid cycle. This is Phosphoenolpyruvate carboxylase 2 from Sorghum bicolor (Sorghum).